A 234-amino-acid polypeptide reads, in one-letter code: UPF0173 metal-dependent hydrolase Meso_1362 (234 aa).

This sequence belongs to the UPF0173 family.

In Chelativorans sp. (strain BNC1), this protein is UPF0173 metal-dependent hydrolase Meso_1362.